Here is a 131-residue protein sequence, read N- to C-terminus: Fluoride-specific ion channel FluC (131 aa).

The next 3 membrane-spanning stretches (helical) occupy residues 3–23, 34–54, and 62–82; these read AAAN…GAWL, IFLT…LLMG, and AVPA…LGGL. Gly-80 and Thr-83 together coordinate Na(+). Residues 101–121 form a helical membrane-spanning segment; that stretch reads WGWLALHAAVHVAGSLLMAWI.

Belongs to the fluoride channel Fluc/FEX (TC 1.A.43) family.

The protein resides in the cell inner membrane. It catalyses the reaction fluoride(in) = fluoride(out). Na(+) is not transported, but it plays an essential structural role and its presence is essential for fluoride channel function. Functionally, fluoride-specific ion channel. Important for reducing fluoride concentration in the cell, thus reducing its toxicity. The sequence is that of Fluoride-specific ion channel FluC from Aromatoleum aromaticum (strain DSM 19018 / LMG 30748 / EbN1) (Azoarcus sp. (strain EbN1)).